We begin with the raw amino-acid sequence, 216 residues long: Ribosomal RNA small subunit methyltransferase G (216 aa).

Residues glycine 73, leucine 78, 124–125 (AE), and arginine 139 each bind S-adenosyl-L-methionine.

The protein belongs to the methyltransferase superfamily. RNA methyltransferase RsmG family.

The protein resides in the cytoplasm. Specifically methylates the N7 position of guanine in position 518 of 16S rRNA. This Arthrobacter sp. (strain FB24) protein is Ribosomal RNA small subunit methyltransferase G.